Consider the following 603-residue polypeptide: Elongation factor 4 (603 aa).

Positions Lys-6–Ile-188 constitute a tr-type G domain. Residues Asp-18 to Thr-23 and Asn-135 to Asp-138 contribute to the GTP site.

This sequence belongs to the TRAFAC class translation factor GTPase superfamily. Classic translation factor GTPase family. LepA subfamily.

The protein localises to the cell membrane. It catalyses the reaction GTP + H2O = GDP + phosphate + H(+). Its function is as follows. Required for accurate and efficient protein synthesis under certain stress conditions. May act as a fidelity factor of the translation reaction, by catalyzing a one-codon backward translocation of tRNAs on improperly translocated ribosomes. Back-translocation proceeds from a post-translocation (POST) complex to a pre-translocation (PRE) complex, thus giving elongation factor G a second chance to translocate the tRNAs correctly. Binds to ribosomes in a GTP-dependent manner. The protein is Elongation factor 4 of Finegoldia magna (strain ATCC 29328 / DSM 20472 / WAL 2508) (Peptostreptococcus magnus).